A 139-amino-acid chain; its full sequence is Transcription factor E (139 aa).

The HTH TFE/IIEalpha-type domain occupies 7–91; it reads IINKKQDEVS…DYEKILDTLL (85 aa).

This sequence belongs to the TFE family. Monomer. Interaction with RNA polymerase subunits RpoF and RpoE is necessary for Tfe stimulatory transcription activity. Able to interact with Tbp and RNA polymerase in the absence of DNA promoter. Interacts both with the preinitiation and elongation complexes.

Transcription factor that plays a role in the activation of archaeal genes transcribed by RNA polymerase. Facilitates transcription initiation by enhancing TATA-box recognition by TATA-box-binding protein (Tbp), and transcription factor B (Tfb) and RNA polymerase recruitment. Not absolutely required for transcription in vitro, but particularly important in cases where Tbp or Tfb function is not optimal. It dynamically alters the nucleic acid-binding properties of RNA polymerases by stabilizing the initiation complex and destabilizing elongation complexes. Seems to translocate with the RNA polymerase following initiation and acts by binding to the non template strand of the transcription bubble in elongation complexes. This Nanoarchaeum equitans (strain Kin4-M) protein is Transcription factor E.